We begin with the raw amino-acid sequence, 88 residues long: Putative membrane protein insertion efficiency factor (88 aa).

A disordered region spans residues 68–88 (VPPPNSDTRARGEADARSHRL). Over residues 75–88 (TRARGEADARSHRL) the composition is skewed to basic and acidic residues.

Belongs to the UPF0161 family.

It localises to the cell inner membrane. Could be involved in insertion of integral membrane proteins into the membrane. In Burkholderia orbicola (strain MC0-3), this protein is Putative membrane protein insertion efficiency factor.